The chain runs to 393 residues: S-adenosylmethionine synthase (393 aa).

Residue His-17 coordinates ATP. Asp-19 contributes to the Mg(2+) binding site. Residue Glu-45 participates in K(+) binding. The L-methionine site is built by Glu-58 and Gln-106. Residues 106-116 (QSAHIAQGVDA) form a flexible loop region. Residues 171-173 (DAK), 237-238 (KF), Asp-246, 252-253 (RK), Ala-269, and Lys-273 each bind ATP. Asp-246 contacts L-methionine. Lys-277 is a binding site for L-methionine.

Belongs to the AdoMet synthase family. As to quaternary structure, homotetramer; dimer of dimers. Requires Mg(2+) as cofactor. K(+) is required as a cofactor.

It localises to the cytoplasm. The catalysed reaction is L-methionine + ATP + H2O = S-adenosyl-L-methionine + phosphate + diphosphate. The protein operates within amino-acid biosynthesis; S-adenosyl-L-methionine biosynthesis; S-adenosyl-L-methionine from L-methionine: step 1/1. Functionally, catalyzes the formation of S-adenosylmethionine (AdoMet) from methionine and ATP. The overall synthetic reaction is composed of two sequential steps, AdoMet formation and the subsequent tripolyphosphate hydrolysis which occurs prior to release of AdoMet from the enzyme. The sequence is that of S-adenosylmethionine synthase from Jannaschia sp. (strain CCS1).